The primary structure comprises 394 residues: DNA replication and repair protein RecF (394 aa).

Residue Gly-30–Thr-37 coordinates ATP.

The protein belongs to the RecF family.

The protein localises to the cytoplasm. Functionally, the RecF protein is involved in DNA metabolism; it is required for DNA replication and normal SOS inducibility. RecF binds preferentially to single-stranded, linear DNA. It also seems to bind ATP. The protein is DNA replication and repair protein RecF of Corynebacterium glutamicum (strain ATCC 13032 / DSM 20300 / JCM 1318 / BCRC 11384 / CCUG 27702 / LMG 3730 / NBRC 12168 / NCIMB 10025 / NRRL B-2784 / 534).